The following is a 92-amino-acid chain: MDLVRAHVFISGRVQGVSFRAYTRDRAREAQVKGWVRNLSDGRVEAVFEGTRPAVQKLISWCYSGPSQAQVERVEVHWEEPTGKEGIFTIVW.

The Acylphosphatase-like domain maps to 5-92 (RAHVFISGRV…GKEGIFTIVW (88 aa)). Active-site residues include Arg20 and Asn38.

It belongs to the acylphosphatase family.

It carries out the reaction an acyl phosphate + H2O = a carboxylate + phosphate + H(+). The sequence is that of Acylphosphatase (acyP) from Chloroflexus aurantiacus (strain ATCC 29366 / DSM 635 / J-10-fl).